The sequence spans 680 residues: Harmonin-binding protein USHBP1 (680 aa).

Basic residues predominate over residues 1 to 15; sequence MSARATRPRSRRGRH. 3 disordered regions span residues 1–101, 135–162, and 217–250; these read MSAR…GPAE, PVEAEDRDPGAPGSFGNEEEASGPGQQE, and ASPPPSMLRAGRRNSNSSSSGAERRPWAPQDSPM. The segment covering 76-86 has biased composition (basic and acidic residues); sequence PEERREPEVEA. Coiled coils occupy residues 177–219, 362–386, and 479–506; these read LGTR…EASP, ATNGDLQAAEKEASRLLVKKEVAMD, and LADLVLRLQLAQREKRGLELREAALRAQ. The interval 524-562 is disordered; it reads LMGDGSSGGSSEDPSSEEEAGEDRQQHYQGPPALLGGQM. Positions 573-661 form a coiled coil; it reads QELSASLTRA…QQAEELAVLT (89 aa).

This sequence belongs to the MCC family. As to quaternary structure, interacts via its C-terminus with the first PDZ domain of USH1C.

The polypeptide is Harmonin-binding protein USHBP1 (Rattus norvegicus (Rat)).